Reading from the N-terminus, the 67-residue chain is DNA-directed RNA polymerases I, II, and III subunit RPABC5 (67 aa).

4 residues coordinate Zn(2+): C7, C10, C44, and C45.

This sequence belongs to the archaeal Rpo10/eukaryotic RPB10 RNA polymerase subunit family. In terms of assembly, component of the RNA polymerase I (Pol I), RNA polymerase II (Pol II) and RNA polymerase III (Pol III) complexes consisting of at least 13, 12 and 17 subunits, respectively.

It localises to the nucleus. Functionally, DNA-dependent RNA polymerase catalyzes the transcription of DNA into RNA using the four ribonucleoside triphosphates as substrates. Common component of RNA polymerases I, II and III which synthesize ribosomal RNA precursors, mRNA precursors and many functional non-coding RNAs, and a small RNAs, such as 5S rRNA and tRNAs, respectively. Pol II is the central component of the basal RNA polymerase II transcription machinery. Pols are composed of mobile elements that move relative to each other. In Pol II, RBP10 is part of the core element with the central large cleft. This is DNA-directed RNA polymerases I, II, and III subunit RPABC5 from Caenorhabditis briggsae.